Reading from the N-terminus, the 652-residue chain is Carboxypeptidase Z (652 aa).

A signal peptide spans methionine 1–alanine 18. The FZ domain occupies asparagine 27–proline 160. Disulfide bonds link cysteine 43–cysteine 109, cysteine 51–cysteine 102, cysteine 93–cysteine 129, cysteine 118–cysteine 157, and cysteine 122–cysteine 146. The Peptidase M14 domain occupies serine 186 to valine 502. Residues histidine 248 and glutamate 251 each contribute to the Zn(2+) site. A glycan (N-linked (GlcNAc...) asparagine) is linked at asparagine 281. Residue histidine 380 participates in Zn(2+) binding. Glutamate 472 functions as the Proton donor/acceptor in the catalytic mechanism. Residues leucine 595–glycine 629 form a disordered region.

The protein belongs to the peptidase M14 family. Zn(2+) is required as a cofactor. As to expression, in placenta, it is present within invasive trophoblasts and in the surrounding extracellular space. Also present in amnion cells, but is not readily apparent in the extracellular matrix of this cell type. Present in normal pituitary gland and neoplastic pituitary gland (especially POMC-, GH- and PRL-producing adenomas) (at protein level). Widely expressed.

The protein localises to the secreted. Its subcellular location is the extracellular space. It is found in the extracellular matrix. Its activity is regulated as follows. Inhibited by 2-mercaptomethyl-3-guanidinoethylthiopropanoic acid (MGTA) and guanidinoethylmercaptosuccinic acid (GEMSA). Inhibited by chelating agents such as EDTA and EGTA. Functionally, cleaves substrates with C-terminal arginine residues. Probably modulates the Wnt signaling pathway, by cleaving some undefined protein. May play a role in cleavage during prohormone processing. This is Carboxypeptidase Z (CPZ) from Homo sapiens (Human).